A 428-amino-acid polypeptide reads, in one-letter code: CinA-like protein (428 aa).

This sequence belongs to the CinA family.

The chain is CinA-like protein from Mycobacterium leprae (strain TN).